Consider the following 357-residue polypeptide: Beta-hexosaminidase (357 aa).

Substrate is bound by residues Asp-66, Arg-74, Arg-140, and 170 to 171 (KH). Catalysis depends on His-183, which acts as the Proton donor/acceptor. Asp-254 (nucleophile) is an active-site residue.

Belongs to the glycosyl hydrolase 3 family. NagZ subfamily.

Its subcellular location is the cytoplasm. It carries out the reaction Hydrolysis of terminal non-reducing N-acetyl-D-hexosamine residues in N-acetyl-beta-D-hexosaminides.. The protein operates within cell wall biogenesis; peptidoglycan recycling. Functionally, plays a role in peptidoglycan recycling by cleaving the terminal beta-1,4-linked N-acetylglucosamine (GlcNAc) from peptide-linked peptidoglycan fragments, giving rise to free GlcNAc, anhydro-N-acetylmuramic acid and anhydro-N-acetylmuramic acid-linked peptides. The protein is Beta-hexosaminidase of Chromobacterium violaceum (strain ATCC 12472 / DSM 30191 / JCM 1249 / CCUG 213 / NBRC 12614 / NCIMB 9131 / NCTC 9757 / MK).